We begin with the raw amino-acid sequence, 340 residues long: Cytosolic Fe-S cluster assembly factor NBP35 (340 aa).

Positions 31, 45, 48, and 54 each coordinate [4Fe-4S] cluster. ATP is bound at residue 84 to 91; that stretch reads GKGGVGKS. [4Fe-4S] cluster-binding residues include Cys257 and Cys260.

This sequence belongs to the Mrp/NBP35 ATP-binding proteins family. NUBP1/NBP35 subfamily. In terms of assembly, heterotetramer of 2 NBP35 and 2 CFD1 chains. [4Fe-4S] cluster is required as a cofactor.

Its subcellular location is the cytoplasm. Component of the cytosolic iron-sulfur (Fe/S) protein assembly (CIA) machinery. Required for maturation of extramitochondrial Fe-S proteins. The NBP35-CFD1 heterotetramer forms a Fe-S scaffold complex, mediating the de novo assembly of an Fe-S cluster and its transfer to target apoproteins. This chain is Cytosolic Fe-S cluster assembly factor NBP35, found in Phaeosphaeria nodorum (strain SN15 / ATCC MYA-4574 / FGSC 10173) (Glume blotch fungus).